Consider the following 187-residue polypeptide: UPF0340 protein SP70585_0722 (187 aa).

Belongs to the UPF0340 family.

This chain is UPF0340 protein SP70585_0722, found in Streptococcus pneumoniae (strain 70585).